The sequence spans 262 residues: Acyl-[acyl-carrier-protein]--UDP-N-acetylglucosamine O-acyltransferase (262 aa).

It belongs to the transferase hexapeptide repeat family. LpxA subfamily. In terms of assembly, homotrimer.

It localises to the cytoplasm. It carries out the reaction a (3R)-hydroxyacyl-[ACP] + UDP-N-acetyl-alpha-D-glucosamine = a UDP-3-O-[(3R)-3-hydroxyacyl]-N-acetyl-alpha-D-glucosamine + holo-[ACP]. The protein operates within glycolipid biosynthesis; lipid IV(A) biosynthesis; lipid IV(A) from (3R)-3-hydroxytetradecanoyl-[acyl-carrier-protein] and UDP-N-acetyl-alpha-D-glucosamine: step 1/6. Its function is as follows. Involved in the biosynthesis of lipid A, a phosphorylated glycolipid that anchors the lipopolysaccharide to the outer membrane of the cell. The protein is Acyl-[acyl-carrier-protein]--UDP-N-acetylglucosamine O-acyltransferase of Burkholderia ambifaria (strain MC40-6).